The following is a 95-amino-acid chain: Protein TusB (95 aa).

The protein belongs to the DsrH/TusB family. Heterohexamer, formed by a dimer of trimers. The hexameric TusBCD complex contains 2 copies each of TusB, TusC and TusD. The TusBCD complex interacts with TusE.

It localises to the cytoplasm. Functionally, part of a sulfur-relay system required for 2-thiolation of 5-methylaminomethyl-2-thiouridine (mnm(5)s(2)U) at tRNA wobble positions. The sequence is that of Protein TusB from Shigella sonnei (strain Ss046).